A 222-amino-acid chain; its full sequence is (4-{4-[2-(gamma-L-glutamylamino)ethyl]phenoxymethyl}furan-2-yl)methanamine synthase (222 aa).

It belongs to the MfnF family.

It catalyses the reaction gamma-L-glutamyltyramine + [5-(aminomethyl)furan-3-yl]methyl diphosphate = (4-{4-[2-(gamma-L-glutamylamino)ethyl]phenoxymethyl}furan-2-yl)methanamine + diphosphate. It participates in cofactor biosynthesis; methanofuran biosynthesis. In terms of biological role, catalyzes the condensation between 5-(aminomethyl)-3-furanmethanol diphosphate (F1-PP) and gamma-glutamyltyramine to produce APMF-Glu. This is (4-{4-[2-(gamma-L-glutamylamino)ethyl]phenoxymethyl}furan-2-yl)methanamine synthase from Methanococcus vannielii.